Here is a 292-residue protein sequence, read N- to C-terminus: AKT-interacting protein (292 aa).

Residues 1-64 form a disordered region; that stretch reads MNPFWNMSSA…ISPSPSVQPT (64 aa). Basic and acidic residues predominate over residues 14–23; the sequence is KRSDNDEKIA. The region spanning 75–223 is the UBC core domain; it reads YLEYSLLAEF…VVDSVKLCNS (149 aa). The segment at 273 to 292 is disordered; that stretch reads SWVKPGSVLPFSKEENSLQT.

Belongs to the ubiquitin-conjugating enzyme family. FTS subfamily.

The protein localises to the cytoplasm. The protein resides in the cell membrane. Functionally, may function to promote vesicle trafficking and/or fusion. May also regulate apoptosis. This Xenopus tropicalis (Western clawed frog) protein is AKT-interacting protein (aktip).